We begin with the raw amino-acid sequence, 353 residues long: AA9 family lytic polysaccharide monooxygenase A (353 aa).

The signal sequence occupies residues 1–19 (MKSTFGLLALAAAAKMAHA). Histidine 20 and histidine 102 together coordinate Cu(2+). A disulfide bridge links cysteine 62 with cysteine 183. Histidine 169 provides a ligand contact to O2. Tyrosine 180 is a Cu(2+) binding site. Residues 266–276 (KPTTTTAAAPA) are compositionally biased toward low complexity. The disordered stretch occupies residues 266–316 (KPTTTTAAAPAETDSCDGDDDDYETETPAPQASATQAPAPQRPAPQTPSGS). The segment covering 279 to 290 (DSCDGDDDDYET) has biased composition (acidic residues). A compositionally biased stretch (low complexity) spans 291–304 (ETPAPQASATQAPA). One can recognise a CBM1 domain in the interval 315–351 (GSVKEWYQCGGINYTGAKNCESGLVCKEWNPYYHQCI). N-linked (GlcNAc...) asparagine glycosylation occurs at asparagine 327.

Belongs to the polysaccharide monooxygenase AA9 family. It depends on Cu(2+) as a cofactor.

It is found in the secreted. It catalyses the reaction [(1-&gt;4)-beta-D-glucosyl]n+m + reduced acceptor + O2 = 4-dehydro-beta-D-glucosyl-[(1-&gt;4)-beta-D-glucosyl]n-1 + [(1-&gt;4)-beta-D-glucosyl]m + acceptor + H2O.. Functionally, lytic polysaccharide monooxygenase (LPMO) that depolymerizes crystalline and amorphous polysaccharides via the oxidation of scissile alpha- or beta-(1-4)-glycosidic bonds, yielding C4 oxidation products. Catalysis by LPMOs requires the reduction of the active-site copper from Cu(II) to Cu(I) by a reducing agent and H(2)O(2) or O(2) as a cosubstrate. The sequence is that of AA9 family lytic polysaccharide monooxygenase A (eglD) from Aspergillus clavatus (strain ATCC 1007 / CBS 513.65 / DSM 816 / NCTC 3887 / NRRL 1 / QM 1276 / 107).